We begin with the raw amino-acid sequence, 645 residues long: Acetyl-coenzyme A synthetase (645 aa).

Residues 190–193 (RGSK), threonine 308, and asparagine 332 contribute to the CoA site. ATP is bound by residues 384–386 (GEP), 408–413 (DTWWQT), aspartate 497, and arginine 512. Serine 520 is a CoA binding site. Arginine 523 contacts ATP. Mg(2+)-binding residues include valine 534, histidine 536, and valine 539. Residue arginine 581 participates in CoA binding. Residue lysine 606 is modified to N6-acetyllysine.

It belongs to the ATP-dependent AMP-binding enzyme family. Requires Mg(2+) as cofactor. Post-translationally, acetylated. Deacetylation by the SIR2-homolog deacetylase activates the enzyme.

The catalysed reaction is acetate + ATP + CoA = acetyl-CoA + AMP + diphosphate. In terms of biological role, catalyzes the conversion of acetate into acetyl-CoA (AcCoA), an essential intermediate at the junction of anabolic and catabolic pathways. AcsA undergoes a two-step reaction. In the first half reaction, AcsA combines acetate with ATP to form acetyl-adenylate (AcAMP) intermediate. In the second half reaction, it can then transfer the acetyl group from AcAMP to the sulfhydryl group of CoA, forming the product AcCoA. This Bdellovibrio bacteriovorus (strain ATCC 15356 / DSM 50701 / NCIMB 9529 / HD100) protein is Acetyl-coenzyme A synthetase.